We begin with the raw amino-acid sequence, 427 residues long: Serine--tRNA ligase (427 aa).

L-serine is bound at residue 231 to 233; that stretch reads TAE. 262–264 is a binding site for ATP; sequence RSE. Residue glutamate 285 coordinates L-serine. Position 349–352 (349–352) interacts with ATP; that stretch reads EISS. Serine 385 contributes to the L-serine binding site.

It belongs to the class-II aminoacyl-tRNA synthetase family. Type-1 seryl-tRNA synthetase subfamily. Homodimer. The tRNA molecule binds across the dimer.

It localises to the cytoplasm. The enzyme catalyses tRNA(Ser) + L-serine + ATP = L-seryl-tRNA(Ser) + AMP + diphosphate + H(+). It carries out the reaction tRNA(Sec) + L-serine + ATP = L-seryl-tRNA(Sec) + AMP + diphosphate + H(+). Its pathway is aminoacyl-tRNA biosynthesis; selenocysteinyl-tRNA(Sec) biosynthesis; L-seryl-tRNA(Sec) from L-serine and tRNA(Sec): step 1/1. In terms of biological role, catalyzes the attachment of serine to tRNA(Ser). Is also able to aminoacylate tRNA(Sec) with serine, to form the misacylated tRNA L-seryl-tRNA(Sec), which will be further converted into selenocysteinyl-tRNA(Sec). This is Serine--tRNA ligase from Sinorhizobium medicae (strain WSM419) (Ensifer medicae).